The sequence spans 381 residues: Guanine nucleotide-binding protein subunit alpha-12 (381 aa).

The S-palmitoyl cysteine moiety is linked to residue Cys-11. Residues 56–381 (RLVKILLLGA…QENLKDIMLQ (326 aa)) enclose the G-alpha domain. Residues 59 to 72 (KILLLGAGESGKST) form a G1 motif region. GTP is bound by residues 67 to 72 (ESGKST) and 202 to 205 (LLAR). Ser-71 serves as a coordination point for Mg(2+). Positions 200 to 208 (DILLARKAT) are G2 motif. Thr-208 lines the Mg(2+) pocket. The residue at position 208 (Thr-208) is a Phosphothreonine. A G3 motif region spans residues 223–232 (FKMVDVGGQR). The interval 292–299 (ILFLNKMD) is G4 motif. GTP is bound by residues 296 to 299 (NKMD) and Ala-353. A G5 motif region spans residues 351 to 356 (TTAIDT).

Belongs to the G-alpha family. G(12) subfamily. As to quaternary structure, g proteins are composed of 3 units; alpha, beta and gamma. The alpha chain contains the guanine nucleotide binding site. Interacts with UBXD5. Interacts (in GTP-bound form) with PPP5C (via TPR repeats); activates PPP5C phosphatase activity and translocates PPP5C to the cell membrane. Interacts with RGS22. Interacts (via N-terminus) with NAPA; the interaction promotes CDH5 localization to plasma membrane. Interacts with CTNND1 (via N-terminus); the interaction regulates CDH1-mediated cell-cell adhesion. Interacts with PPP2R1A; the interaction promotes protein phosphatase 2A activation causing dephosphorylation of MAPT. Interacts (in GTP-bound form) with ARHGEF1. Interacts (in GTP-bound form) with ARHGEF11 (via RGS domain). Interacts (in GTP-bound form) with ARHGEF12 (via RGS domain).

It is found in the cell membrane. The protein resides in the lateral cell membrane. The protein localises to the cytoplasm. Functionally, guanine nucleotide-binding proteins (G proteins) are involved as modulators or transducers in various transmembrane signaling systems. Activates effector molecule RhoA by binding and activating RhoGEFs (ARHGEF12/LARG). GNA12-dependent Rho signaling subsequently regulates transcription factor AP-1 (activating protein-1). GNA12-dependent Rho signaling also regulates protein phosphatese 2A activation causing dephosphorylation of its target proteins. Promotes tumor cell invasion and metastasis by activating RhoA/ROCK signaling pathway and up-regulating pro-inflammatory cytokine production. Inhibits CDH1-mediated cell adhesion in process independent from Rho activation. Together with NAPA promotes CDH5 localization to plasma membrane. May play a role in the control of cell migration through the TOR signaling cascade. The chain is Guanine nucleotide-binding protein subunit alpha-12 (GNA12) from Homo sapiens (Human).